The following is a 151-amino-acid chain: UPF0178 protein Hhal_1913 (151 aa).

This sequence belongs to the UPF0178 family.

The sequence is that of UPF0178 protein Hhal_1913 from Halorhodospira halophila (strain DSM 244 / SL1) (Ectothiorhodospira halophila (strain DSM 244 / SL1)).